We begin with the raw amino-acid sequence, 526 residues long: Dye-decolorizing peroxidase (526 aa).

A signal peptide spans M1–A21. The propeptide occupies A22 to L63. N186 is a glycosylation site (N-linked (GlcNAc...) asparagine). D231 serves as the catalytic Proton acceptor. N367 carries an N-linked (GlcNAc...) asparagine glycan. H376 is a binding site for heme. 2 N-linked (GlcNAc...) asparagine glycosylation sites follow: N473 and N484.

Belongs to the DyP-type peroxidase family. Heme b is required as a cofactor.

Its subcellular location is the secreted. It carries out the reaction Reactive Blue 5 + 2 H2O2 = 2,2'-disulfonyl azobenzene + 3-[(4-amino-6-chloro-1,3,5-triazin-2-yl)amino]benzenesulfonate + phthalate + 2 H2O + 2 H(+). It catalyses the reaction 2 a phenolic donor + H2O2 = 2 a phenolic radical donor + 2 H2O. In terms of biological role, manganese-independent peroxidase that is able to convert a large number of compounds, but its physiological substrate is not known. In addition to classic peroxidase substrates (e.g. 2,6-dimethoxyphenol), oxidizes dyes such as Reactive Blue 5 and Reactive Black 5. The chain is Dye-decolorizing peroxidase from Mycena epipterygia (Yellow-stemmed mycena).